The sequence spans 379 residues: Putative beta-glucosidase 6 (379 aa).

Residues 1 to 20 form the signal peptide; it reads MEKTFALITIFLAFAFSGKC. A beta-D-glucoside contacts are provided by residues Gln-43, His-141, and 186–187; that span reads NE. The active-site Proton donor is the Glu-187. Cys-206 and Cys-213 are disulfide-bonded. An N-linked (GlcNAc...) asparagine glycan is attached at Asn-217. Tyr-329 contacts a beta-D-glucoside. Asn-362 is a glycosylation site (N-linked (GlcNAc...) asparagine).

This sequence belongs to the glycosyl hydrolase 1 family.

It catalyses the reaction Hydrolysis of terminal, non-reducing beta-D-glucosyl residues with release of beta-D-glucose.. The protein is Putative beta-glucosidase 6 of Arabidopsis thaliana (Mouse-ear cress).